A 556-amino-acid chain; its full sequence is Glucomannan 4-beta-mannosyltransferase 7 (556 aa).

Residues Val58–Phe78 traverse the membrane as a helical segment. Residue Asp158 is part of the active site. Substrate contacts are provided by Asp217 and Asp219. Residue Asp311 is part of the active site. 4 consecutive transmembrane segments (helical) span residues Ile390 to Phe410, Leu426 to Phe448, Leu502 to Gly522, and Leu526 to Gly546.

The protein belongs to the glycosyltransferase 2 family. Plant cellulose synthase-like A subfamily. As to expression, ubiquitous.

The protein localises to the golgi apparatus membrane. It catalyses the reaction GDP-mannose + (glucomannan)n = GDP + (glucomannan)n+1.. Its function is as follows. Probable mannan synthase which consists of a 4-beta-mannosyltransferase activity on mannan using GDP-mannose. The beta-1,4-mannan product is the backbone for galactomannan synthesis by galactomannan galactosyltransferase. Galactomannan is a noncellulosic polysaccharides of plant cell wall. Required for synthesis of a cell wall polysaccharide essential for pollen tube growth, for cell wall structure, or for signaling during plant embryo development. This Arabidopsis thaliana (Mouse-ear cress) protein is Glucomannan 4-beta-mannosyltransferase 7.